Reading from the N-terminus, the 322-residue chain is MMLGITELTYTALIAFLIVIIIGPIFIPMLRKFKFGQTVRDDGPQTHLAKNGTPTMGGIIMIVAILITGLTRVKVSHDMAVGLICIAGFGFIGFLDDFIKIKLKRSLGLKAYQKIILQVALSFYVAFYQYTSSSSASQLMIPFTDFVINVGILYIPIMMFIIVAIVNAVNLTDGLDGLASGVTLIVSVFFMLFASSIAGNTEVAVLAAATVGACLGFLGFNSYPARVFMGDTGSMALGGAVVAFSVLTNSVLIIPIIGGIYFAEALSVLIQVGYFKATRKRFFKMAPIHHHFEQCGWPETRVVFIFWIITVVLAWISIIAVF.

Helical transmembrane passes span Tyr-10–Leu-30, Asn-51–Thr-71, Met-79–Ile-99, Leu-107–Phe-127, Phe-146–Val-166, Leu-178–Ala-198, Val-203–Tyr-223, Val-227–Leu-247, Ser-250–Ile-270, and Val-302–Phe-322.

This sequence belongs to the glycosyltransferase 4 family. MraY subfamily. Requires Mg(2+) as cofactor.

The protein resides in the cell membrane. The catalysed reaction is UDP-N-acetyl-alpha-D-muramoyl-L-alanyl-gamma-D-glutamyl-meso-2,6-diaminopimeloyl-D-alanyl-D-alanine + di-trans,octa-cis-undecaprenyl phosphate = di-trans,octa-cis-undecaprenyl diphospho-N-acetyl-alpha-D-muramoyl-L-alanyl-D-glutamyl-meso-2,6-diaminopimeloyl-D-alanyl-D-alanine + UMP. The protein operates within cell wall biogenesis; peptidoglycan biosynthesis. Its function is as follows. Catalyzes the initial step of the lipid cycle reactions in the biosynthesis of the cell wall peptidoglycan: transfers peptidoglycan precursor phospho-MurNAc-pentapeptide from UDP-MurNAc-pentapeptide onto the lipid carrier undecaprenyl phosphate, yielding undecaprenyl-pyrophosphoryl-MurNAc-pentapeptide, known as lipid I. The polypeptide is Phospho-N-acetylmuramoyl-pentapeptide-transferase (Clostridioides difficile (strain 630) (Peptoclostridium difficile)).